The following is a 97-amino-acid chain: Large ribosomal subunit protein eL30 (97 aa).

This sequence belongs to the eukaryotic ribosomal protein eL30 family.

The protein is Large ribosomal subunit protein eL30 of Methanoregula boonei (strain DSM 21154 / JCM 14090 / 6A8).